The primary structure comprises 206 residues: Probable GTP-binding protein EngB (206 aa).

The region spanning 24–198 is the EngB-type G domain; it reads QGREVAFAGR…HARLDEWLGL (175 aa). GTP-binding positions include 32–39, 59–63, 77–80, 144–147, and 177–179; these read GRSNVGKS, GRTQL, DLPG, TKAD, and FSA. Mg(2+) contacts are provided by Ser39 and Thr61.

Belongs to the TRAFAC class TrmE-Era-EngA-EngB-Septin-like GTPase superfamily. EngB GTPase family. Mg(2+) is required as a cofactor.

Necessary for normal cell division and for the maintenance of normal septation. The sequence is that of Probable GTP-binding protein EngB from Alkalilimnicola ehrlichii (strain ATCC BAA-1101 / DSM 17681 / MLHE-1).